The primary structure comprises 563 residues: Delta-1-pyrroline-5-carboxylate dehydrogenase, mitochondrial (563 aa).

A mitochondrion-targeting transit peptide spans 1–24 (MLLRSAALCRALLARRGRAAGLCR). At Ser-44 the chain carries Phosphoserine. Lys-52 is subject to N6-acetyllysine. 5 positions are modified to N6-acetyllysine; alternate: Lys-93, Lys-99, Lys-114, Lys-130, and Lys-175. N6-succinyllysine; alternate is present on residues Lys-93, Lys-99, Lys-114, Lys-130, and Lys-175. Residues Ser-208, Lys-233, and 286–290 (GSVPT) contribute to the NAD(+) site. The active-site Proton acceptor is the Glu-314. Residue Lys-318 is modified to N6-acetyllysine. Residue Lys-347 is modified to N6-succinyllysine. Cys-348 functions as the Nucleophile in the catalytic mechanism. N6-acetyllysine is present on residues Lys-365 and Lys-376. At Lys-395 the chain carries N6-succinyllysine. Glu-447 is an NAD(+) binding site. Lys-509 is subject to N6-acetyllysine; alternate. An N6-succinyllysine; alternate modification is found at Lys-509. Ser-513 is a binding site for substrate. Position 531 is an N6-acetyllysine (Lys-531).

This sequence belongs to the aldehyde dehydrogenase family. As to quaternary structure, homodimer.

The protein localises to the mitochondrion matrix. The enzyme catalyses L-glutamate 5-semialdehyde + NAD(+) + H2O = L-glutamate + NADH + 2 H(+). Its pathway is amino-acid degradation; L-proline degradation into L-glutamate; L-glutamate from L-proline: step 2/2. Irreversible conversion of delta-1-pyrroline-5-carboxylate (P5C), derived either from proline or ornithine, to glutamate. This is a necessary step in the pathway interconnecting the urea and tricarboxylic acid cycles. The preferred substrate is glutamic gamma-semialdehyde, other substrates include succinic, glutaric and adipic semialdehydes. The polypeptide is Delta-1-pyrroline-5-carboxylate dehydrogenase, mitochondrial (ALDH4A1) (Bos taurus (Bovine)).